The sequence spans 314 residues: DNA-directed RNA polymerase subunit alpha (314 aa).

The alpha N-terminal domain (alpha-NTD) stretch occupies residues 1–228 (MIEIEKPKIE…EHLSIFVNLT (228 aa)). The alpha C-terminal domain (alpha-CTD) stretch occupies residues 245 to 314 (KEKVLEMTIE…DLGLSLRNEN (70 aa)).

This sequence belongs to the RNA polymerase alpha chain family. As to quaternary structure, homodimer. The RNAP catalytic core consists of 2 alpha, 1 beta, 1 beta' and 1 omega subunit. When a sigma factor is associated with the core the holoenzyme is formed, which can initiate transcription.

The enzyme catalyses RNA(n) + a ribonucleoside 5'-triphosphate = RNA(n+1) + diphosphate. Its function is as follows. DNA-dependent RNA polymerase catalyzes the transcription of DNA into RNA using the four ribonucleoside triphosphates as substrates. The protein is DNA-directed RNA polymerase subunit alpha of Listeria innocua serovar 6a (strain ATCC BAA-680 / CLIP 11262).